The sequence spans 33 residues: Thrombin-like enzyme RP34 (33 aa).

One can recognise a Peptidase S1 domain in the interval 1-33 (VIGGDEXDINEHRSLALMYXSWSHRFIXXGXLI).

Belongs to the peptidase S1 family. Snake venom subfamily. In terms of assembly, homodimer. In terms of tissue distribution, expressed by the venom gland.

It localises to the secreted. The catalysed reaction is Selective cleavage of Arg-|-Xaa bond in fibrinogen, to form fibrin, and release fibrinopeptide A. The specificity of further degradation of fibrinogen varies with species origin of the enzyme.. Its function is as follows. Thrombin-like snake venom serine protease that displays clotting activity on fibrinogen. Shows both arginine-ester hydrolase and amidase activities on synthetic substrates. Also shows proteolytic activity toward casein. This chain is Thrombin-like enzyme RP34, found in Cerastes cerastes (Horned desert viper).